Here is a 128-residue protein sequence, read N- to C-terminus: Phosphoribosyl-AMP cyclohydrolase (128 aa).

A Mg(2+)-binding site is contributed by aspartate 77. Cysteine 78 provides a ligand contact to Zn(2+). Positions 79 and 81 each coordinate Mg(2+). Positions 94 and 101 each coordinate Zn(2+).

The protein belongs to the PRA-CH family. Homodimer. Mg(2+) is required as a cofactor. It depends on Zn(2+) as a cofactor.

Its subcellular location is the cytoplasm. It catalyses the reaction 1-(5-phospho-beta-D-ribosyl)-5'-AMP + H2O = 1-(5-phospho-beta-D-ribosyl)-5-[(5-phospho-beta-D-ribosylamino)methylideneamino]imidazole-4-carboxamide. It participates in amino-acid biosynthesis; L-histidine biosynthesis; L-histidine from 5-phospho-alpha-D-ribose 1-diphosphate: step 3/9. Functionally, catalyzes the hydrolysis of the adenine ring of phosphoribosyl-AMP. The sequence is that of Phosphoribosyl-AMP cyclohydrolase from Granulibacter bethesdensis (strain ATCC BAA-1260 / CGDNIH1).